Here is a 209-residue protein sequence, read N- to C-terminus: Octanoyltransferase (209 aa).

A BPL/LPL catalytic domain is found at N28–L203. Residues R66 to H73, A133 to G135, and G146 to A148 each bind substrate. The active-site Acyl-thioester intermediate is the C164.

This sequence belongs to the LipB family.

The protein localises to the cytoplasm. It catalyses the reaction octanoyl-[ACP] + L-lysyl-[protein] = N(6)-octanoyl-L-lysyl-[protein] + holo-[ACP] + H(+). It functions in the pathway protein modification; protein lipoylation via endogenous pathway; protein N(6)-(lipoyl)lysine from octanoyl-[acyl-carrier-protein]: step 1/2. Its function is as follows. Catalyzes the transfer of endogenously produced octanoic acid from octanoyl-acyl-carrier-protein onto the lipoyl domains of lipoate-dependent enzymes. Lipoyl-ACP can also act as a substrate although octanoyl-ACP is likely to be the physiological substrate. In Pelobacter propionicus (strain DSM 2379 / NBRC 103807 / OttBd1), this protein is Octanoyltransferase.